The following is a 1038-amino-acid chain: E3 ubiquitin-protein ligase Topors (1038 aa).

Residues 53 to 96 are disordered; the sequence is ESGSESGDNEAEEPVSAGPDNANAIGEPGTSASAAEENGTVERN. The RING-type zinc-finger motif lies at 102–141; it reads CAICLSRCRRKCFTDSCMHQFCFKCLCEWSKIKPECPLCK. The tract at residues 495–682 is interaction with hairy/hry; the sequence is AAANAEVAAI…SSDSSTTNSE (188 aa). Disordered stretches follow at residues 627 to 858 and 972 to 1038; these read DQLR…SSTA and GESE…LLPY. The segment covering 633-642 has biased composition (basic residues); that stretch reads RSIRSKKSRR. Positions 643 to 668 are enriched in low complexity; it reads SSMPARSDSGSSPSSCSSSSFHFSSS. Residues 686-699 are compositionally biased toward basic residues; sequence KKSRKRVANNKRSK. Low complexity predominate over residues 723-744; it reads QQQISQKKPQRQPESSSDSPSS. Residues 792–801 show a composition bias toward basic and acidic residues; sequence ATLEDRKPVK. Threonine 820 is subject to Phosphothreonine. At serine 822 the chain carries Phosphoserine. Over residues 841–858 the composition is skewed to low complexity; it reads SHSNQSSQSASLASSSTA. Over residues 987–1031 the composition is skewed to acidic residues; the sequence is EEQDEEDEEDEDQEEDDQEEEKAAEEEEEEEEDDDDSDNHDENDE.

Interacts with hairy/hry, p53 and Top1. Interacts with the gypsy chromatin insulator complex, composed of Cp190, mod(mdg4) and su(Hw); interacts directly with mod(mdg4) and su(Hw). Interacts with Lam/lamin.

It localises to the nucleus. Its subcellular location is the chromosome. It catalyses the reaction S-ubiquitinyl-[E2 ubiquitin-conjugating enzyme]-L-cysteine + [acceptor protein]-L-lysine = [E2 ubiquitin-conjugating enzyme]-L-cysteine + N(6)-ubiquitinyl-[acceptor protein]-L-lysine.. In terms of biological role, functions as a ubiquitin-protein E3 ligase. Negatively regulates the transcriptional repressor hairy/hry by promoting its ubiquitination and subsequent degradation. Also directs the nuclear organization of the gypsy chromatin insulator. Chromatin insulators are regulatory elements which establish independent domains of transcriptional activity within eukaryotic genomes. Insulators have two defining properties; they can block the communication between an enhancer and a promoter when placed between them, and can also buffer transgenes from position effect variegation (PEV). Insulators are proposed to structure the chromatin fiber into independent domains of differing transcriptional potential by promoting the formation of distinct chromatin loops. This chromatin looping may require the formation of insulator bodies, where homotypic interactions between individual subunits of the insulator complex could promote the clustering of widely spaced insulators at the nuclear periphery. Within the gypsy insulator complex, this protein may promote formation of nuclear insulator bodies by recruiting individual insulator complexes to the nuclear lamina. The polypeptide is E3 ubiquitin-protein ligase Topors (Topors) (Drosophila melanogaster (Fruit fly)).